The chain runs to 501 residues: Aldehyde dehydrogenase family 2 member C4 (501 aa).

245 to 250 (GSTDVG) contributes to the NAD(+) binding site. E268 serves as the catalytic Proton acceptor. Catalysis depends on C302, which acts as the Nucleophile.

Belongs to the aldehyde dehydrogenase family. As to quaternary structure, homotetramer.

Its subcellular location is the cytoplasm. The protein resides in the cytosol. It carries out the reaction an aldehyde + NAD(+) + H2O = a carboxylate + NADH + 2 H(+). Its function is as follows. Involved in ferulic acid and sinapic acid biosynthesis by oxidation of conyferylaldehyde and sinapaldehyde, respectively. Can oxidize L-lactaldehyde. Possesses activity on acetaldehyde and glycolaldehyde in vitro. In Arabidopsis thaliana (Mouse-ear cress), this protein is Aldehyde dehydrogenase family 2 member C4 (ALDH2C4).